The primary structure comprises 519 residues: Pleckstrin homology domain-containing family A member 8 (519 aa).

The PH domain maps to 1–93; that stretch reads MEGVLYKWTN…WLVALGSAKA (93 aa). At T139 the chain carries Phosphothreonine. Residue S145 is modified to Phosphoserine. T153 is modified (phosphothreonine). A disordered region spans residues 275–302; the sequence is GEENLESHDKDPAQPGSDSVCSPESPWE. Residues 330-473 are glycolipid transfer protein homology domain; the sequence is IPTEAFLASC…EDFVAALTIK (144 aa).

In terms of assembly, homodimer. Interacts with ARF1; the interaction together with phosphatidylinositol 4-phosphate binding is required for FAPP2 GlcCer transfer ability.

The protein localises to the golgi apparatus. It localises to the trans-Golgi network membrane. It is found in the membrane. Cargo transport protein that is required for apical transport from the trans-Golgi network (TGN). Transports AQP2 from the trans-Golgi network (TGN) to sites of AQP2 phosphorylation. Mediates the non-vesicular transport of glucosylceramide (GlcCer) from the trans-Golgi network (TGN) to the plasma membrane and plays a pivotal role in the synthesis of complex glycosphingolipids. Binding of both phosphatidylinositol 4-phosphate (PIP) and ARF1 are essential for the GlcCer transfer ability. Also required for primary cilium formation, possibly by being involved in the transport of raft lipids to the apical membrane, and for membrane tubulation. The sequence is that of Pleckstrin homology domain-containing family A member 8 (Plekha8) from Mus musculus (Mouse).